We begin with the raw amino-acid sequence, 330 residues long: D-alanine--D-alanine ligase (330 aa).

The region spanning Lys-120–Leu-326 is the ATP-grasp domain. Residue Ala-150–Glu-205 coordinates ATP. Mg(2+) contacts are provided by Asp-280, Glu-293, and Asn-295.

The protein belongs to the D-alanine--D-alanine ligase family. Requires Mg(2+) as cofactor. The cofactor is Mn(2+).

Its subcellular location is the cytoplasm. The catalysed reaction is 2 D-alanine + ATP = D-alanyl-D-alanine + ADP + phosphate + H(+). It functions in the pathway cell wall biogenesis; peptidoglycan biosynthesis. In terms of biological role, cell wall formation. The sequence is that of D-alanine--D-alanine ligase from Aliivibrio fischeri (strain MJ11) (Vibrio fischeri).